The chain runs to 293 residues: Neugrin (293 aa).

Residues 1–15 form the signal peptide; sequence MALSLSLFLGGRVRA. Disordered stretches follow at residues 25–48 and 162–211; these read QGVAGPGSISREPDPDSDWEPEER and PLSA…EKNK. Ser41 is subject to Phosphoserine. Asn270 carries N-linked (GlcNAc...) asparagine glycosylation.

Belongs to the neugrin family. As to quaternary structure, forms a regulatory protein-RNA complex, consisting of RCC1L, NGRN, RPUSD3, RPUSD4, TRUB2, FASTKD2 and 16S mt-rRNA. Interacts with 16S mt-rRNA; this interaction is direct.

The protein resides in the nucleus. It is found in the secreted. It localises to the mitochondrion membrane. Plays an essential role in mitochondrial ribosome biogenesis. As a component of a functional protein-RNA module, consisting of RCC1L, NGRN, RPUSD3, RPUSD4, TRUB2, FASTKD2 and 16S mitochondrial ribosomal RNA (16S mt-rRNA), controls 16S mt-rRNA abundance and is required for intra-mitochondrial translation of core subunits of the oxidative phosphorylation system. This is Neugrin (Ngrn) from Rattus norvegicus (Rat).